The sequence spans 450 residues: uncharacterized protein (450 aa).

The region spanning 1-58 (MAKGEIVTVKIEEMDFKGYGVGYCEGKPLKVRGGILGQRVAVRVKKGKKGRAEGEIVE) is the TRAM domain. Residues Cys71, Cys77, Cys80, and Cys159 each coordinate [4Fe-4S] cluster. Gln285, Tyr314, Glu335, and Asp380 together coordinate S-adenosyl-L-methionine. Residue Cys407 is the Nucleophile of the active site.

It belongs to the class I-like SAM-binding methyltransferase superfamily. RNA M5U methyltransferase family.

This is an uncharacterized protein from Caldanaerobacter subterraneus subsp. tengcongensis (strain DSM 15242 / JCM 11007 / NBRC 100824 / MB4) (Thermoanaerobacter tengcongensis).